The chain runs to 376 residues: Alanine racemase 1 (376 aa).

The active-site Proton acceptor; specific for D-alanine is the Lys-40. An N6-(pyridoxal phosphate)lysine modification is found at Lys-40. Residue Arg-138 coordinates substrate. The Proton acceptor; specific for L-alanine role is filled by Tyr-268. Met-316 contacts substrate.

It belongs to the alanine racemase family. The cofactor is pyridoxal 5'-phosphate.

It catalyses the reaction L-alanine = D-alanine. It participates in amino-acid biosynthesis; D-alanine biosynthesis; D-alanine from L-alanine: step 1/1. Catalyzes the interconversion of L-alanine and D-alanine. May also act on other amino acids. The chain is Alanine racemase 1 (alr1) from Oceanobacillus iheyensis (strain DSM 14371 / CIP 107618 / JCM 11309 / KCTC 3954 / HTE831).